The primary structure comprises 92 residues: Neurophysin 2 (92 aa).

7 disulfide bridges follow: cysteine 10–cysteine 54, cysteine 13–cysteine 27, cysteine 21–cysteine 44, cysteine 28–cysteine 34, cysteine 61–cysteine 73, cysteine 67–cysteine 85, and cysteine 74–cysteine 79.

Belongs to the vasopressin/oxytocin family. As to quaternary structure, there is an equilibrium between the monomeric and dimeric forms. On peptide binding the dimeric form predominates. In terms of processing, a shorter neurophysin molecule (1-90) also exists and is probably derived from the complete protein by proteolytic degradation (in vivo or after extraction).

Its subcellular location is the secreted. In terms of biological role, neurophysin 2 specifically binds vasopressin. The protein is Neurophysin 2 (AVP) of Loxodonta africana (African elephant).